Consider the following 932-residue polypeptide: 3-hydroxy-3-methylglutaryl-coenzyme A reductase (932 aa).

Helical transmembrane passes span 20–40, 59–79, 92–112, 113–133, 162–182, and 193–213; these read VIVC…FTGL, LSSD…YLYL, ILGI…SAVI, HLFG…LLLI, MAIL…VISI, and VFCC…MTFF. The N-linked (GlcNAc...) asparagine glycan is linked to Asn279. A helical transmembrane segment spans residues 322–342; that stretch reads ILTAILATVLASHYIFFSDLA. The interval 343-467 is linker; the sequence is TYPEKRVSIM…APRPMPELLE (125 aa). Positions 357–367 are enriched in basic and acidic residues; that stretch reads VVNPGSDHEDA. Residues 357 to 442 are disordered; it reads VVNPGSDHED…SGSEDEEEEV (86 aa). A compositionally biased stretch (polar residues) spans 374 to 403; the sequence is GTLSSSPSTSDVRVIESMTSRTQACQTDPV. The span at 406–421 shows a compositional bias: low complexity; sequence SPRNSRSSSPVSSHSV. The segment at 468–932 is catalytic; it reads ILNVGKGPNA…APGTCTANAS (465 aa). Residues Glu575, Lys707, and Asp783 each act as charge relay system in the active site. Asn850 carries an N-linked (GlcNAc...) asparagine glycan. His882 (proton donor) is an active-site residue. A glycan (N-linked (GlcNAc...) asparagine) is linked at Asn886. Position 888 is a phosphoserine; by AMPK (Ser888).

The protein belongs to the HMG-CoA reductase family.

The protein localises to the endoplasmic reticulum membrane. The enzyme catalyses (R)-mevalonate + 2 NADP(+) + CoA = (3S)-3-hydroxy-3-methylglutaryl-CoA + 2 NADPH + 2 H(+). The protein operates within metabolic intermediate biosynthesis; (R)-mevalonate biosynthesis; (R)-mevalonate from acetyl-CoA: step 3/3. Its function is as follows. This transmembrane glycoprotein is involved in the control of cholesterol biosynthesis. It is the rate-limiting enzyme of sterol biosynthesis. The sequence is that of 3-hydroxy-3-methylglutaryl-coenzyme A reductase (HMGCR) from Strongylocentrotus purpuratus (Purple sea urchin).